Consider the following 520-residue polypeptide: Bifunctional purine biosynthesis protein PurH (520 aa).

The region spanning 1–147 is the MGS-like domain; sequence MAKIGRALIS…KNNRDVTVVV (147 aa).

The protein belongs to the PurH family.

The enzyme catalyses (6R)-10-formyltetrahydrofolate + 5-amino-1-(5-phospho-beta-D-ribosyl)imidazole-4-carboxamide = 5-formamido-1-(5-phospho-D-ribosyl)imidazole-4-carboxamide + (6S)-5,6,7,8-tetrahydrofolate. The catalysed reaction is IMP + H2O = 5-formamido-1-(5-phospho-D-ribosyl)imidazole-4-carboxamide. It functions in the pathway purine metabolism; IMP biosynthesis via de novo pathway; 5-formamido-1-(5-phospho-D-ribosyl)imidazole-4-carboxamide from 5-amino-1-(5-phospho-D-ribosyl)imidazole-4-carboxamide (10-formyl THF route): step 1/1. It participates in purine metabolism; IMP biosynthesis via de novo pathway; IMP from 5-formamido-1-(5-phospho-D-ribosyl)imidazole-4-carboxamide: step 1/1. This Geobacter sp. (strain M21) protein is Bifunctional purine biosynthesis protein PurH.